Reading from the N-terminus, the 285-residue chain is ATP synthase gamma chain (285 aa).

Belongs to the ATPase gamma chain family. F-type ATPases have 2 components, CF(1) - the catalytic core - and CF(0) - the membrane proton channel. CF(1) has five subunits: alpha(3), beta(3), gamma(1), delta(1), epsilon(1). CF(0) has three main subunits: a, b and c.

It localises to the cell inner membrane. In terms of biological role, produces ATP from ADP in the presence of a proton gradient across the membrane. The gamma chain is believed to be important in regulating ATPase activity and the flow of protons through the CF(0) complex. The protein is ATP synthase gamma chain of Protochlamydia amoebophila (strain UWE25).